Consider the following 110-residue polypeptide: Insulin (110 aa).

The signal sequence occupies residues 1 to 24 (MALWMRLLPLLALLALWGPDPAQA). 3 disulfides stabilise this stretch: cysteine 31-cysteine 96, cysteine 43-cysteine 109, and cysteine 95-cysteine 100. Positions 57-87 (EAEDLQVGQVELGGGPGAGSLQPLALEGSLQ) are cleaved as a propeptide — c peptide.

The protein belongs to the insulin family. In terms of assembly, heterodimer of a B chain and an A chain linked by two disulfide bonds.

Its subcellular location is the secreted. In terms of biological role, insulin decreases blood glucose concentration. It increases cell permeability to monosaccharides, amino acids and fatty acids. It accelerates glycolysis, the pentose phosphate cycle, and glycogen synthesis in liver. In Pongo pygmaeus (Bornean orangutan), this protein is Insulin (INS).